The following is a 218-amino-acid chain: Elongation factor Ts (218 aa).

The segment at 82–85 is involved in Mg(2+) ion dislocation from EF-Tu; the sequence is TDFV.

The protein belongs to the EF-Ts family.

It localises to the cytoplasm. Functionally, associates with the EF-Tu.GDP complex and induces the exchange of GDP to GTP. It remains bound to the aminoacyl-tRNA.EF-Tu.GTP complex up to the GTP hydrolysis stage on the ribosome. The sequence is that of Elongation factor Ts from Picosynechococcus sp. (strain ATCC 27264 / PCC 7002 / PR-6) (Agmenellum quadruplicatum).